Reading from the N-terminus, the 187-residue chain is Small monomeric GTPase RhbA (187 aa).

8 residues coordinate GDP: Ser-17, Val-18, Gly-19, Lys-20, Ser-21, Ser-22, Val-33, and Glu-34. A GTP-binding site is contributed by Ser-17. The GTP site is built by Gly-19, Lys-20, Ser-21, Ser-22, and Val-33. Ser-21 contributes to the Mg(2+) binding site. 5 residues coordinate GTP: Tyr-36, Thr-39, Asn-120, Asp-123, and Ala-152. The Effector region signature appears at 36–44 (YYPTIENTF). Thr-39 provides a ligand contact to Mg(2+). The GDP site is built by Asn-120, Asp-123, and Ala-152. The S-farnesyl cysteine moiety is linked to residue Cys-184.

It belongs to the small GTPase superfamily. Rheb family. In terms of processing, farnesylation is important for efficiently activating mTORC1-mediated signaling.

The protein resides in the cell membrane. The catalysed reaction is GTP + H2O = GDP + phosphate + H(+). Alternates between an inactive form bound to GDP and an active form bound to GTP. Its function is as follows. Small GTPase that acts as an allosteric activator of the canonical TOR pathway, an evolutionarily conserved central nutrient sensor that stimulates anabolic reactions and macromolecule biosynthesis to promote cellular biomass generation and growth. Plays a role in virulence. In Aspergillus fumigatus (strain ATCC MYA-4609 / CBS 101355 / FGSC A1100 / Af293) (Neosartorya fumigata), this protein is Small monomeric GTPase RhbA.